The following is a 356-amino-acid chain: NADH-quinone oxidoreductase subunit H (356 aa).

8 helical membrane-spanning segments follow: residues 4–24, 79–99, 127–147, 166–186, 198–218, 251–271, 289–309, and 329–349; these read ALIL…LTGV, LLAP…IPFG, GVLY…IAGW, ISYE…TGSL, MWNI…TAMF, FFLA…LLFF, FIGL…FIWV, and MIPW…YWKE.

This sequence belongs to the complex I subunit 1 family. As to quaternary structure, NDH-1 is composed of 14 different subunits. Subunits NuoA, H, J, K, L, M, N constitute the membrane sector of the complex.

It localises to the cell inner membrane. It carries out the reaction a quinone + NADH + 5 H(+)(in) = a quinol + NAD(+) + 4 H(+)(out). NDH-1 shuttles electrons from NADH, via FMN and iron-sulfur (Fe-S) centers, to quinones in the respiratory chain. The immediate electron acceptor for the enzyme in this species is believed to be ubiquinone. Couples the redox reaction to proton translocation (for every two electrons transferred, four hydrogen ions are translocated across the cytoplasmic membrane), and thus conserves the redox energy in a proton gradient. This subunit may bind ubiquinone. This Leptospira biflexa serovar Patoc (strain Patoc 1 / ATCC 23582 / Paris) protein is NADH-quinone oxidoreductase subunit H.